A 336-amino-acid polypeptide reads, in one-letter code: Porphobilinogen deaminase (336 aa).

Residue Cys251 is modified to S-(dipyrrolylmethanemethyl)cysteine. 2 positions are modified to phosphoserine: Ser327 and Ser329.

Belongs to the HMBS family. It depends on dipyrromethane as a cofactor.

It carries out the reaction 4 porphobilinogen + H2O = hydroxymethylbilane + 4 NH4(+). It participates in porphyrin-containing compound metabolism; protoporphyrin-IX biosynthesis; coproporphyrinogen-III from 5-aminolevulinate: step 2/4. Tetrapolymerization of the monopyrrole PBG into the hydroxymethylbilane pre-uroporphyrinogen in several discrete steps. In Schizosaccharomyces pombe (strain 972 / ATCC 24843) (Fission yeast), this protein is Porphobilinogen deaminase (hem3).